A 251-amino-acid polypeptide reads, in one-letter code: Derlin-1 (251 aa).

An N-acetylserine modification is found at serine 2. The Cytoplasmic segment spans residues serine 2–threonine 15. The helical transmembrane segment at arginine 16–leucine 31 threads the bilayer. Over glycine 32 to glycine 69 the chain is Lumenal. Residues phenylalanine 70 to glycine 89 form a helical membrane-spanning segment. Topologically, residues alanine 90 to arginine 94 are cytoplasmic. A helical membrane pass occupies residues proline 95–alanine 115. Residues methionine 116 to methionine 122 are Lumenal-facing. The helical transmembrane segment at isoleucine 123 to asparagine 137 threads the bilayer. The Cytoplasmic segment spans residues arginine 138–tyrosine 154. The chain crosses the membrane as a helical span at residues leucine 155–isoleucine 166. Over glycine 167 to valine 170 the chain is Lumenal. A helical membrane pass occupies residues isoleucine 171–arginine 189. Topologically, residues tyrosine 190 to glutamine 251 are cytoplasmic. At serine 201 the chain carries Phosphoserine. Phosphothreonine is present on threonine 202. Residue serine 226 is modified to Phosphoserine. The interval arginine 229–glutamine 251 is disordered. Residues asparagine 241–leucine 248 carry the SHP-box motif.

It belongs to the derlin family. Homotetramer. The four subunits of the tetramer are arranged in a twofold symmetry. Forms homo- and heterooligomers with DERL2 and DERL3; binding to DERL3 is poorer than that between DERL2 and DERL3. Interacts (via SHP-box motif) with VCP. Interacts with AMFR, SELENOS, SEL1L, SELENOK and SYVN1, as well as with SEL1L-SYVN1 and VCP-SELENOS protein complexes; this interaction is weaker than that observed between DERL2 and these complexes. Interacts with NGLY1 and YOD1. Does not bind to EDEM1. Interacts with DNAJB9. Interacts with RNF103. Interacts with HM13. Interacts with XBP1 isoform 1 (via luminal/ectodomain domain); the interaction obviates the need for ectodomain shedding prior HM13/SPP-mediated XBP1 isoform 1 cleavage. Interacts with the signal recognition particle/SRP and the SRP receptor; in the process of endoplasmic reticulum stress-induced pre-emptive quality control. May interact with UBXN6. Interacts with ZFAND2B; probably through VCP. Interacts with CCDC47. Interacts with C18orf32. May interact with TRAM1. Forms a complex with SVIP and VCP/p97.

The protein localises to the endoplasmic reticulum membrane. In terms of biological role, functional component of endoplasmic reticulum-associated degradation (ERAD) for misfolded lumenal proteins. Forms homotetramers which encircle a large channel traversing the endoplasmic reticulum (ER) membrane. This allows the retrotranslocation of misfolded proteins from the ER into the cytosol where they are ubiquitinated and degraded by the proteasome. The channel has a lateral gate within the membrane which provides direct access to membrane proteins with no need to reenter the ER lumen first. May mediate the interaction between VCP and the misfolded protein. Also involved in endoplasmic reticulum stress-induced pre-emptive quality control, a mechanism that selectively attenuates the translocation of newly synthesized proteins into the endoplasmic reticulum and reroutes them to the cytosol for proteasomal degradation. By controlling the steady-state expression of the IGF1R receptor, indirectly regulates the insulin-like growth factor receptor signaling pathway. The chain is Derlin-1 from Bos taurus (Bovine).